A 324-amino-acid polypeptide reads, in one-letter code: Probable RuBisCO transcriptional regulator (324 aa).

Residues Phe-8–Thr-65 form the HTH lysR-type domain. Positions Phe-25–Gln-44 form a DNA-binding region, H-T-H motif.

The protein belongs to the LysR transcriptional regulatory family.

The protein localises to the plastid. The protein resides in the cyanelle. Functionally, trans-acting transcriptional regulator of RuBisCO genes (rbcL and rbcS) expression. The sequence is that of Probable RuBisCO transcriptional regulator (rbcR) from Cyanophora paradoxa.